A 341-amino-acid polypeptide reads, in one-letter code: Glyceraldehyde-3-phosphate dehydrogenase 2 (341 aa).

Residues 12–13 (RI), Arg78, and Thr120 contribute to the NAD(+) site. Residues 152-154 (SCT) and Thr183 contribute to the D-glyceraldehyde 3-phosphate site. Cys153 acts as the Nucleophile in catalysis. Residue Asn184 participates in NAD(+) binding. Residues Arg198, 211–212 (TG), and Arg234 each bind D-glyceraldehyde 3-phosphate. Asn313 contacts NAD(+).

This sequence belongs to the glyceraldehyde-3-phosphate dehydrogenase family. Homotetramer.

The protein localises to the cytoplasm. The enzyme catalyses D-glyceraldehyde 3-phosphate + phosphate + NAD(+) = (2R)-3-phospho-glyceroyl phosphate + NADH + H(+). Its pathway is carbohydrate degradation; glycolysis; pyruvate from D-glyceraldehyde 3-phosphate: step 1/5. In terms of biological role, catalyzes the oxidative phosphorylation of glyceraldehyde 3-phosphate (G3P) to 1,3-bisphosphoglycerate (BPG) using the cofactor NAD. The first reaction step involves the formation of a hemiacetal intermediate between G3P and a cysteine residue, and this hemiacetal intermediate is then oxidized to a thioester, with concomitant reduction of NAD to NADH. The reduced NADH is then exchanged with the second NAD, and the thioester is attacked by a nucleophilic inorganic phosphate to produce BPG. The chain is Glyceraldehyde-3-phosphate dehydrogenase 2 (gapA2) from Staphylococcus epidermidis (strain ATCC 35984 / DSM 28319 / BCRC 17069 / CCUG 31568 / BM 3577 / RP62A).